Consider the following 562-residue polypeptide: Putative transport protein YPA_0617 (562 aa).

The next 6 helical transmembrane spans lie at 8–28 (LLNG…LCLG), 37–57 (LGNA…HFAI), 66–86 (FMLF…SIFF), 94–114 (MLAL…GKLF), 118–138 (IGLT…LVGA), and 158–178 (NLSL…ILGA). RCK C-terminal domains are found at residues 202–288 (LDTD…SFRN) and 290–373 (KEVF…KIGF). 5 consecutive transmembrane segments (helical) span residues 383-403 (LLAF…TFQF), 406-426 (FSFG…LGFL), 447-467 (FGLM…INSS), 475-495 (MLIS…VFGA), and 541-561 (IANV…PGIL).

The protein belongs to the AAE transporter (TC 2.A.81) family. YbjL subfamily.

It localises to the cell membrane. This is Putative transport protein YPA_0617 from Yersinia pestis bv. Antiqua (strain Antiqua).